The primary structure comprises 907 residues: Protein translocase subunit SecA (907 aa).

Residues Gln-87, 105 to 109, and Asp-512 contribute to the ATP site; that span reads GEGKT. Residues 834-907 form a disordered region; it reads QSDVDDMEQR…KYKQCHGKLS (74 aa). Positions 840 to 856 are enriched in basic and acidic residues; it reads MEQRRREEEAKIQRDYQ. A compositionally biased stretch (polar residues) spans 865 to 876; the sequence is DESQASSDNTPK. A compositionally biased stretch (basic and acidic residues) spans 878–887; that stretch reads MIREGDKVGR. Residues Cys-891, Cys-893, Cys-902, and His-903 each coordinate Zn(2+). Residues 897-907 show a composition bias toward basic residues; the sequence is KKYKQCHGKLS.

This sequence belongs to the SecA family. In terms of assembly, monomer and homodimer. Part of the essential Sec protein translocation apparatus which comprises SecA, SecYEG and auxiliary proteins SecDF-YajC and YidC. It depends on Zn(2+) as a cofactor.

The protein localises to the cell inner membrane. It localises to the cytoplasm. The enzyme catalyses ATP + H2O + cellular proteinSide 1 = ADP + phosphate + cellular proteinSide 2.. Its function is as follows. Part of the Sec protein translocase complex. Interacts with the SecYEG preprotein conducting channel. Has a central role in coupling the hydrolysis of ATP to the transfer of proteins into and across the cell membrane, serving both as a receptor for the preprotein-SecB complex and as an ATP-driven molecular motor driving the stepwise translocation of polypeptide chains across the membrane. This chain is Protein translocase subunit SecA, found in Shewanella denitrificans (strain OS217 / ATCC BAA-1090 / DSM 15013).